Here is a 606-residue protein sequence, read N- to C-terminus: DNA mismatch repair protein MutL (606 aa).

Residues Q348–P378 form a disordered region.

It belongs to the DNA mismatch repair MutL/HexB family.

In terms of biological role, this protein is involved in the repair of mismatches in DNA. It is required for dam-dependent methyl-directed DNA mismatch repair. May act as a 'molecular matchmaker', a protein that promotes the formation of a stable complex between two or more DNA-binding proteins in an ATP-dependent manner without itself being part of a final effector complex. This is DNA mismatch repair protein MutL from Rhizobium etli (strain CIAT 652).